A 148-amino-acid polypeptide reads, in one-letter code: Large ribosomal subunit protein bL9 (148 aa).

Belongs to the bacterial ribosomal protein bL9 family.

Its function is as follows. Binds to the 23S rRNA. This chain is Large ribosomal subunit protein bL9, found in Acidithiobacillus ferrooxidans (strain ATCC 23270 / DSM 14882 / CIP 104768 / NCIMB 8455) (Ferrobacillus ferrooxidans (strain ATCC 23270)).